We begin with the raw amino-acid sequence, 641 residues long: PWWP domain-containing DNA repair factor 3A (641 aa).

The interval 98-329 is disordered; it reads LNERQGSSSR…LEEDEDDEEP (232 aa). A Phosphoserine modification is found at Ser156. 2 stretches are compositionally biased toward basic and acidic residues: residues 194-203 and 295-307; these read QDREASRKQQ and ADTRPLEEARPLS. Ser307 is subject to Phosphoserine. Residues 343 to 404 form the PWWP domain; sequence VGMLVWHKYQ…KHFDCKEKQA (62 aa). Residues 463 to 486 form a disordered region; it reads TRFPQLSGGDPEEPVAGSPQGRRP.

This sequence belongs to the PWWP3A family. In terms of assembly, interacts with TP53BP1 (via BRCT domain); the interaction is not dependent on its phosphorylation status. Binds nucleosomes. Interacts with trimethylated 'Lys-36' of histone H3 (H3K36me3) (in vitro).

Its subcellular location is the nucleus. In terms of biological role, involved in the DNA damage response pathway by contributing to the maintenance of chromatin architecture. Recruited to the vicinity of DNA breaks by TP53BP1 and plays an accessory role to facilitate damage-induced chromatin changes and promoting chromatin relaxation. Required for efficient DNA repair and cell survival following DNA damage. The chain is PWWP domain-containing DNA repair factor 3A (PWWP3A) from Bos taurus (Bovine).